A 528-amino-acid chain; its full sequence is Peptide chain release factor 3 (528 aa).

The 271-residue stretch at alanine 10–arginine 280 folds into the tr-type G domain. GTP is bound by residues serine 19–threonine 26, aspartate 87–histidine 91, and asparagine 141–aspartate 144.

This sequence belongs to the TRAFAC class translation factor GTPase superfamily. Classic translation factor GTPase family. PrfC subfamily.

Its subcellular location is the cytoplasm. Functionally, increases the formation of ribosomal termination complexes and stimulates activities of RF-1 and RF-2. It binds guanine nucleotides and has strong preference for UGA stop codons. It may interact directly with the ribosome. The stimulation of RF-1 and RF-2 is significantly reduced by GTP and GDP, but not by GMP. This is Peptide chain release factor 3 from Desulfotalea psychrophila (strain LSv54 / DSM 12343).